The chain runs to 84 residues: Small ribosomal subunit protein bS18B (84 aa).

The segment covering 1-10 (MAVKRAPSKK) has biased composition (basic residues). The segment at 1–20 (MAVKRAPSKKVRAEQARRPK) is disordered.

This sequence belongs to the bacterial ribosomal protein bS18 family. Part of the 30S ribosomal subunit. Forms a tight heterodimer with protein bS6.

Its function is as follows. Binds as a heterodimer with protein bS6 to the central domain of the 16S rRNA, where it helps stabilize the platform of the 30S subunit. In Nocardia farcinica (strain IFM 10152), this protein is Small ribosomal subunit protein bS18B.